The primary structure comprises 1788 residues: Glutamine and serine-rich protein 1 (1788 aa).

Residues Met-1 to Ala-53 show a composition bias toward low complexity. Disordered stretches follow at residues Met-1–Gln-69, Thr-472–Thr-498, and Ser-532–Asp-617. Composition is skewed to polar residues over residues Pro-60–Gln-69, Val-478–Leu-492, Ser-532–Pro-569, and Val-576–Pro-594. Residues Ser-670 and Ser-940 each carry the phosphoserine modification. Thr-1003 bears the Phosphothreonine mark. At Ser-1041 the chain carries Phosphoserine. 2 disordered regions span residues Gln-1104–Tyr-1163 and Ile-1234–Ser-1264. A Glycyl lysine isopeptide (Lys-Gly) (interchain with G-Cter in SUMO2) cross-link involves residue Lys-1112. Basic and acidic residues predominate over residues Pro-1126–Gly-1136. Residue Lys-1137 forms a Glycyl lysine isopeptide (Lys-Gly) (interchain with G-Cter in SUMO2) linkage. Ser-1262, Ser-1281, and Ser-1282 each carry phosphoserine. Thr-1394 carries the phosphothreonine modification. At Ser-1401 the chain carries Phosphoserine. The interval Val-1494–Ser-1588 is disordered. Over residues Ile-1510–Lys-1537 the composition is skewed to low complexity. Residues Ile-1545 to Phe-1561 are compositionally biased toward basic and acidic residues. Residues Ser-1562 to Ser-1575 are compositionally biased toward low complexity.

Interacts with TET1.

It localises to the chromosome. Its function is as follows. Plays an essential role in the protection and maintenance of transcriptional and developmental programs. Protects many bivalent promoters and poised enhancers from hypermethylation, showing a marked preference for these regulatory elements over other types of promoters or enhancers. Mechanistically, cooperates with TET1 and binds to DNA in a common complex to inhibit the binding of DNMT3A/3B and therefore de novo methylation. The chain is Glutamine and serine-rich protein 1 from Mus musculus (Mouse).